A 359-amino-acid polypeptide reads, in one-letter code: Mitochondrial calcium uniporter regulator 1 (359 aa).

At Met1–Pro68 the chain is on the mitochondrial intermembrane side. A helical membrane pass occupies residues Leu69–Pro85. Residues Arg86–Lys338 lie on the Mitochondrial matrix side of the membrane. Positions Glu235–Ala310 form a coiled coil. The helical transmembrane segment at Tyr339 to Trp358 threads the bilayer. Ile359 is a topological domain (mitochondrial intermembrane).

Belongs to the CCDC90 family. Interacts (via coiled coil regions) with MCU; the interaction is direct. Interacts with SMDT1/EMRE; the interaction is direct. Interacts with PPIF. Ubiquitously expressed.

Its subcellular location is the mitochondrion inner membrane. In terms of biological role, key regulator of mitochondrial calcium uniporter (MCU) required for calcium entry into mitochondrion. Plays a direct role in uniporter-mediated calcium uptake via a direct interaction with MCU. Probably involved in the assembly of the membrane components of the uniporter complex (uniplex). In Homo sapiens (Human), this protein is Mitochondrial calcium uniporter regulator 1.